Here is a 435-residue protein sequence, read N- to C-terminus: MSETHLSNQKFADFSLQTEIKTALNESGFEYCTPIQALSLPILLQKKDIAGQAQTGTGKTLAFLVATFNHLLTTPIPEGRQLNQPRAIIMAPTRELAIQIAKDADLLAKHTGLKVGIVYGGESYEVQRKVLDKGVDILIGTTGRIIDYVRQGIINVSAIQAVVLDEADRMFDLGFIKDIRFLFRRMPDAKSRLNMLFSATLSMKVQELAYDHMNEPEKVEIAPNEKTSKNIKEEIFYPSMDEKMRLLLTLLEEDWPDKAIVFSNTKHSCEKLWSWLEGDGHRVGLLTGDVPQKKRIRILELFTEGKLDVLVATDVAARGLHISDVSHVYNYDLPDDCEDYVHRIGRTGRAGKKGVSVSFACEEYALNLPAIEEYINHTIPVTNYDSEALLDDIPAPVRVHRKHNSRPQGRSGSGGKPRSGNRNAPRRHDKTRRHS.

A Q motif motif is present at residues 9 to 37 (QKFADFSLQTEIKTALNESGFEYCTPIQA). A Helicase ATP-binding domain is found at 40-219 (LPILLQKKDI…YDHMNEPEKV (180 aa)). Position 53-60 (53-60 (AQTGTGKT)) interacts with ATP. Positions 165–168 (DEAD) match the DEAD box motif. A Helicase C-terminal domain is found at 243–390 (KMRLLLTLLE…VTNYDSEALL (148 aa)). Residues 395–435 (APVRVHRKHNSRPQGRSGSGGKPRSGNRNAPRRHDKTRRHS) are disordered. Basic residues predominate over residues 424–435 (APRRHDKTRRHS).

Belongs to the DEAD box helicase family. RhlB subfamily. In terms of assembly, component of the RNA degradosome, which is a multiprotein complex involved in RNA processing and mRNA degradation.

It is found in the cytoplasm. It carries out the reaction ATP + H2O = ADP + phosphate + H(+). In terms of biological role, DEAD-box RNA helicase involved in RNA degradation. Has RNA-dependent ATPase activity and unwinds double-stranded RNA. This chain is ATP-dependent RNA helicase RhlB, found in Shewanella sediminis (strain HAW-EB3).